The sequence spans 384 residues: S-adenosylmethionine synthase (384 aa).

ATP is bound at residue H15. D17 is a Mg(2+) binding site. Residue E43 coordinates K(+). L-methionine contacts are provided by E56 and Q99. Residues Q99–R109 form a flexible loop region. ATP is bound by residues D164–K166, R230–F231, D239, R245–K246, A262, and K266. D239 serves as a coordination point for L-methionine. Residue K270 participates in L-methionine binding.

Belongs to the AdoMet synthase family. Homotetramer; dimer of dimers. Mg(2+) serves as cofactor. The cofactor is K(+).

It localises to the cytoplasm. It catalyses the reaction L-methionine + ATP + H2O = S-adenosyl-L-methionine + phosphate + diphosphate. The protein operates within amino-acid biosynthesis; S-adenosyl-L-methionine biosynthesis; S-adenosyl-L-methionine from L-methionine: step 1/1. In terms of biological role, catalyzes the formation of S-adenosylmethionine (AdoMet) from methionine and ATP. The overall synthetic reaction is composed of two sequential steps, AdoMet formation and the subsequent tripolyphosphate hydrolysis which occurs prior to release of AdoMet from the enzyme. This chain is S-adenosylmethionine synthase, found in Pasteurella multocida (strain Pm70).